The chain runs to 95 residues: Co-chaperonin GroES (95 aa).

This sequence belongs to the GroES chaperonin family. As to quaternary structure, heptamer of 7 subunits arranged in a ring. Interacts with the chaperonin GroEL.

Its subcellular location is the cytoplasm. In terms of biological role, together with the chaperonin GroEL, plays an essential role in assisting protein folding. The GroEL-GroES system forms a nano-cage that allows encapsulation of the non-native substrate proteins and provides a physical environment optimized to promote and accelerate protein folding. GroES binds to the apical surface of the GroEL ring, thereby capping the opening of the GroEL channel. This is Co-chaperonin GroES from Chlorobium phaeobacteroides (strain DSM 266 / SMG 266 / 2430).